A 166-amino-acid chain; its full sequence is MALRLEDKQAIVAEVNEAAKGALSAVVADSRGVTVGEMTGLRKAAREAGVYIRVVRNTLVKRAVEGTDFECLNETFTGPTLIAFSNEHPGAAARLLKDFAADQEKFAIKAAAFEGELIPAADIDRLAKLPTYDEAIAQLMMTMKEASAGKLVRTLAALRDQKEEAA.

The protein belongs to the universal ribosomal protein uL10 family. Part of the ribosomal stalk of the 50S ribosomal subunit. The N-terminus interacts with L11 and the large rRNA to form the base of the stalk. The C-terminus forms an elongated spine to which L12 dimers bind in a sequential fashion forming a multimeric L10(L12)X complex.

Its function is as follows. Forms part of the ribosomal stalk, playing a central role in the interaction of the ribosome with GTP-bound translation factors. This is Large ribosomal subunit protein uL10 from Shewanella sediminis (strain HAW-EB3).